The primary structure comprises 456 residues: uncharacterized protein (456 aa).

A run of 11 helical transmembrane segments spans residues 12 to 32, 63 to 83, 86 to 106, 143 to 163, 179 to 199, 208 to 228, 237 to 257, 305 to 325, 348 to 368, 390 to 410, and 414 to 434; these read SFIWGAPLLILLSGTGLYLTL, FAALCTALAATIGTGNIVGVA, VQAGGPGAIFWMWLVALLGMA, WLAKLFALFGVMVAFFGIGTF, IPVLVTAIIVTLLVGLIILGG, SVIVPFMAILYVTTSLVIILL, ILLIIDSAFDPQAALGGAVGL, FLDTIIVCTMTGIVLVLTGAW, IGATIVTVGLLFFAFTTILGW, LAYIMLVGLGAFLHLNLIWII, and VNGLMAFPNLIALIGLRKVII.

The protein belongs to the alanine or glycine:cation symporter (AGCS) (TC 2.A.25) family.

Its subcellular location is the cell inner membrane. This is an uncharacterized protein from Haemophilus influenzae (strain ATCC 51907 / DSM 11121 / KW20 / Rd).